A 315-amino-acid polypeptide reads, in one-letter code: Homoserine kinase (315 aa).

96–106 (PHSRGLGSSAA) contributes to the ATP binding site.

This sequence belongs to the GHMP kinase family. Homoserine kinase subfamily.

It is found in the cytoplasm. It carries out the reaction L-homoserine + ATP = O-phospho-L-homoserine + ADP + H(+). The protein operates within amino-acid biosynthesis; L-threonine biosynthesis; L-threonine from L-aspartate: step 4/5. Catalyzes the ATP-dependent phosphorylation of L-homoserine to L-homoserine phosphate. The polypeptide is Homoserine kinase (Mycobacterium leprae (strain Br4923)).